The primary structure comprises 308 residues: NAD kinase (308 aa).

The active-site Proton acceptor is aspartate 86. NAD(+)-binding positions include 86 to 87, arginine 91, 160 to 161, aspartate 190, and 201 to 206; these read DG, NE, and TAYAFS.

The protein belongs to the NAD kinase family. A divalent metal cation is required as a cofactor.

It localises to the cytoplasm. The catalysed reaction is NAD(+) + ATP = ADP + NADP(+) + H(+). Functionally, involved in the regulation of the intracellular balance of NAD and NADP, and is a key enzyme in the biosynthesis of NADP. Catalyzes specifically the phosphorylation on 2'-hydroxyl of the adenosine moiety of NAD to yield NADP. In Mycolicibacterium paratuberculosis (strain ATCC BAA-968 / K-10) (Mycobacterium paratuberculosis), this protein is NAD kinase.